The sequence spans 196 residues: Large ribosomal subunit protein bL25 (196 aa).

Belongs to the bacterial ribosomal protein bL25 family. CTC subfamily. Part of the 50S ribosomal subunit; part of the 5S rRNA/L5/L18/L25 subcomplex. Contacts the 5S rRNA. Binds to the 5S rRNA independently of L5 and L18.

In terms of biological role, this is one of the proteins that binds to the 5S RNA in the ribosome where it forms part of the central protuberance. The polypeptide is Large ribosomal subunit protein bL25 (Geotalea daltonii (strain DSM 22248 / JCM 15807 / FRC-32) (Geobacter daltonii)).